The sequence spans 327 residues: Cobalamin biosynthesis protein CobD (327 aa).

A run of 4 helical transmembrane segments spans residues 61-78 (MWLTVGLVAACIFAGLVI), 80-102 (SILPHAGTAGAIAEVVIVAILLA), 160-182 (GIVAPAFWFLVGGLPGLFAYKFI), and 300-322 (AALVLFWSTMSLMTGLVIAASLV).

It belongs to the CobD/CbiB family.

The protein resides in the cell membrane. Its pathway is cofactor biosynthesis; adenosylcobalamin biosynthesis. Its function is as follows. Converts cobyric acid to cobinamide by the addition of aminopropanol on the F carboxylic group. The polypeptide is Cobalamin biosynthesis protein CobD (Brucella melitensis biotype 1 (strain ATCC 23456 / CCUG 17765 / NCTC 10094 / 16M)).